A 101-amino-acid polypeptide reads, in one-letter code: Small ribosomal subunit protein uS14 (101 aa).

It belongs to the universal ribosomal protein uS14 family. In terms of assembly, part of the 30S ribosomal subunit. Contacts proteins S3 and S10.

In terms of biological role, binds 16S rRNA, required for the assembly of 30S particles and may also be responsible for determining the conformation of the 16S rRNA at the A site. The protein is Small ribosomal subunit protein uS14 of Pelagibacter ubique (strain HTCC1062).